We begin with the raw amino-acid sequence, 303 residues long: MTVTDTFKLFILRHGQSELNSENIFCGWIDAQLTEKGKSQARHSAKLIKQFCDSNNISLPQIGYTSRLIRTQQTMDVILEELGLKHTNYVITTNTNIKEELQDTRFEGSMPVLQTWRLNERHYGAWQGQRKPDILKEYGKEKYMYIRRDYNGKPPKVNLNLEMVQEENDQGSSTGYDFKEPNRHLKYGPEEKANERLPESESLCEVVVRLKPFLNNVVLSTANKISQESCVIVGHGSSVRSLLKVLEGISDEDIKDVDIPNGIPLVIELDRDNYSFVRKFYLDPESAKVNAQMVRDEGFEKNP.

Residues 13–20, 26–27, arginine 70, 120–123, lysine 131, and 147–148 each bind substrate; these read RHGQSELN, CG, ERHY, and RR. Histidine 14 (tele-phosphohistidine intermediate) is an active-site residue. Catalysis depends on glutamate 120, which acts as the Proton donor/acceptor. Residues 168-198 are disordered; sequence NDQGSSTGYDFKEPNRHLKYGPEEKANERLP. Over residues 177-198 the composition is skewed to basic and acidic residues; the sequence is DFKEPNRHLKYGPEEKANERLP. Residue 236 to 237 coordinates substrate; that stretch reads GS.

Belongs to the phosphoglycerate mutase family. BPG-dependent PGAM subfamily.

It catalyses the reaction (2R)-2-phosphoglycerate = (2R)-3-phosphoglycerate. It participates in carbohydrate degradation; glycolysis; pyruvate from D-glyceraldehyde 3-phosphate: step 3/5. In terms of biological role, could be non-functional. This chain is Phosphoglycerate mutase 3 (GPM3), found in Saccharomyces cerevisiae (strain ATCC 204508 / S288c) (Baker's yeast).